Here is a 228-residue protein sequence, read N- to C-terminus: Leucine rich adaptor protein 1-like (228 aa).

Residue methionine 1 is modified to N-acetylmethionine. Residues 1 to 89 (MEDSPLPDLR…GSPRGSHSSA (89 aa)) are disordered. Basic and acidic residues-rich tracts occupy residues 8 to 21 (DLRD…RKVP) and 28 to 42 (LRGE…DRDP). Residues 44-56 (GGSGGGGGGGGGC) are compositionally biased toward gly residues. Low complexity predominate over residues 57 to 88 (SSSSSYCSFPPSLSSSSSSSPTSGSPRGSHSS).

The polypeptide is Leucine rich adaptor protein 1-like (LURAP1L) (Homo sapiens (Human)).